A 149-amino-acid chain; its full sequence is Calmodulin (149 aa).

Ala-2 carries the post-translational modification N-acetylalanine. 4 EF-hand domains span residues 8–43, 44–79, 81–116, and 117–149; these read EQIA…LGQN, PTEA…KMKD, DSEE…LGEK, and LTDE…MMAK. Residues Asp-21, Asp-23, Asp-25, Ser-27, Glu-32, Asp-57, Asp-59, Asn-61, Thr-63, Glu-68, Asp-94, Asp-96, Asn-98, Tyr-100, and Asp-105 each contribute to the Ca(2+) site. Residue Lys-116 is modified to N6,N6,N6-trimethyllysine. 5 residues coordinate Ca(2+): Asp-130, Asp-132, Asp-134, Gln-136, and Glu-141.

This sequence belongs to the calmodulin family.

Its function is as follows. Calmodulin mediates the control of a large number of enzymes, ion channels and other proteins by Ca(2+). Among the enzymes to be stimulated by the calmodulin-Ca(2+) complex are a number of protein kinases and phosphatases. The polypeptide is Calmodulin (Mougeotia scalaris (Green alga)).